The sequence spans 110 residues: T cell receptor alpha variable 22 (110 aa).

A signal peptide spans 1–21; it reads MKRILGALLGLLSAQVCCVRG. The region spanning 22–110 is the Ig-like domain; it reads IQVEQSPPDL…DSGVYFCAVE (89 aa). Residues Asn38 and Asn44 are each glycosylated (N-linked (GlcNAc...) asparagine). Residues Cys43 and Cys107 are joined by a disulfide bond.

As to quaternary structure, alpha-beta TR is a heterodimer composed of an alpha and beta chain; disulfide-linked. The alpha-beta TR is associated with the transmembrane signaling CD3 coreceptor proteins to form the TR-CD3 (TcR or TCR). The assembly of alpha-beta TR heterodimers with CD3 occurs in the endoplasmic reticulum where a single alpha-beta TR heterodimer associates with one CD3D-CD3E heterodimer, one CD3G-CD3E heterodimer and one CD247 homodimer forming a stable octameric structure. CD3D-CD3E and CD3G-CD3E heterodimers preferentially associate with TR alpha and TR beta chains, respectively. The association of the CD247 homodimer is the last step of TcR assembly in the endoplasmic reticulum and is required for transport to the cell surface.

The protein localises to the cell membrane. In terms of biological role, v region of the variable domain of T cell receptor (TR) alpha chain that participates in the antigen recognition. Alpha-beta T cell receptors are antigen specific receptors which are essential to the immune response and are present on the cell surface of T lymphocytes. Recognize peptide-major histocompatibility (MH) (pMH) complexes that are displayed by antigen presenting cells (APC), a prerequisite for efficient T cell adaptive immunity against pathogens. Binding of alpha-beta TR to pMH complex initiates TR-CD3 clustering on the cell surface and intracellular activation of LCK that phosphorylates the ITAM motifs of CD3G, CD3D, CD3E and CD247 enabling the recruitment of ZAP70. In turn ZAP70 phosphorylates LAT, which recruits numerous signaling molecules to form the LAT signalosome. The LAT signalosome propagates signal branching to three major signaling pathways, the calcium, the mitogen-activated protein kinase (MAPK) kinase and the nuclear factor NF-kappa-B (NF-kB) pathways, leading to the mobilization of transcription factors that are critical for gene expression and essential for T cell growth and differentiation. The T cell repertoire is generated in the thymus, by V-(D)-J rearrangement. This repertoire is then shaped by intrathymic selection events to generate a peripheral T cell pool of self-MH restricted, non-autoaggressive T cells. Post-thymic interaction of alpha-beta TR with the pMH complexes shapes TR structural and functional avidity. In Homo sapiens (Human), this protein is T cell receptor alpha variable 22.